Consider the following 370-residue polypeptide: MSFAPLTNDTFLRACRRQATDYTPLWLMRQAGRYLPEYKATRARAGSFMGLATNVDYATEVTLQPLERFPLDAAILFSDILTVPDAMGLGLSFAEGEGPRFAKVVRDEAAVAELAVPDMDKLRYVFDAVTSIRRALDGRVPLIGFSGSPWTLACYMVEGKGSDDYRLVKSLMYARPDLMHRILAINADSVAAYLNAQIDAGAQAVMVFDSWGGVLADGAFQEFSLAYTKRVLAGLNRTGADGQDVPRIVFTKGGGIWLPDMKDLDCEVLGLDWTANLARARAIVGGEVGGPGKALQGNIDPNVLFAPPERVAEQARAVLDSFGAPHTDRTTTGPTHIFNLGHGISQFTPPEHVAALVETVHSHSRALRQR.

Substrate contacts are provided by residues 29 to 33 (RQAGR), D79, Y155, S210, and H342.

The protein belongs to the uroporphyrinogen decarboxylase family. Homodimer.

The protein resides in the cytoplasm. It catalyses the reaction uroporphyrinogen III + 4 H(+) = coproporphyrinogen III + 4 CO2. The protein operates within porphyrin-containing compound metabolism; protoporphyrin-IX biosynthesis; coproporphyrinogen-III from 5-aminolevulinate: step 4/4. Catalyzes the decarboxylation of four acetate groups of uroporphyrinogen-III to yield coproporphyrinogen-III. The polypeptide is Uroporphyrinogen decarboxylase (Delftia acidovorans (strain DSM 14801 / SPH-1)).